The following is a 149-amino-acid chain: D-aminoacyl-tRNA deacylase (149 aa).

A Gly-cisPro motif, important for rejection of L-amino acids motif is present at residues 137 to 138; sequence GP.

This sequence belongs to the DTD family. In terms of assembly, homodimer.

It is found in the cytoplasm. It carries out the reaction glycyl-tRNA(Ala) + H2O = tRNA(Ala) + glycine + H(+). It catalyses the reaction a D-aminoacyl-tRNA + H2O = a tRNA + a D-alpha-amino acid + H(+). Functionally, an aminoacyl-tRNA editing enzyme that deacylates mischarged D-aminoacyl-tRNAs. Also deacylates mischarged glycyl-tRNA(Ala), protecting cells against glycine mischarging by AlaRS. Acts via tRNA-based rather than protein-based catalysis; rejects L-amino acids rather than detecting D-amino acids in the active site. By recycling D-aminoacyl-tRNA to D-amino acids and free tRNA molecules, this enzyme counteracts the toxicity associated with the formation of D-aminoacyl-tRNA entities in vivo and helps enforce protein L-homochirality. The chain is D-aminoacyl-tRNA deacylase from Clostridium botulinum (strain 657 / Type Ba4).